The following is a 162-amino-acid chain: 2-C-methyl-D-erythritol 2,4-cyclodiphosphate synthase (162 aa).

A divalent metal cation-binding residues include D12 and H14. Residues 12–14 (DVH) and 38–39 (HS) contribute to the 4-CDP-2-C-methyl-D-erythritol 2-phosphate site. H46 lines the a divalent metal cation pocket. Residues 60-62 (DIG), 65-69 (FPDTD), and R146 each bind 4-CDP-2-C-methyl-D-erythritol 2-phosphate.

It belongs to the IspF family. In terms of assembly, homotrimer. It depends on a divalent metal cation as a cofactor.

The catalysed reaction is 4-CDP-2-C-methyl-D-erythritol 2-phosphate = 2-C-methyl-D-erythritol 2,4-cyclic diphosphate + CMP. The protein operates within isoprenoid biosynthesis; isopentenyl diphosphate biosynthesis via DXP pathway; isopentenyl diphosphate from 1-deoxy-D-xylulose 5-phosphate: step 4/6. In terms of biological role, involved in the biosynthesis of isopentenyl diphosphate (IPP) and dimethylallyl diphosphate (DMAPP), two major building blocks of isoprenoid compounds. Catalyzes the conversion of 4-diphosphocytidyl-2-C-methyl-D-erythritol 2-phosphate (CDP-ME2P) to 2-C-methyl-D-erythritol 2,4-cyclodiphosphate (ME-CPP) with a corresponding release of cytidine 5-monophosphate (CMP). This chain is 2-C-methyl-D-erythritol 2,4-cyclodiphosphate synthase, found in Bordetella parapertussis (strain 12822 / ATCC BAA-587 / NCTC 13253).